A 146-amino-acid chain; its full sequence is Angiogenin (146 aa).

An N-terminal signal peptide occupies residues 1-24 (MVMGPHLLLLVFILGLGLTPPTLA). The residue at position 25 (Gln25) is a Pyrrolidone carboxylic acid. His37 functions as the Proton acceptor in the catalytic mechanism. Cystine bridges form between Cys50-Cys105, Cys63-Cys116, and Cys81-Cys131. A Nucleolar localization signal motif is present at residues 55-59 (RLRNM). Residues Cys105 and Ile127 each coordinate tRNA. His138 (proton donor) is an active-site residue.

Belongs to the pancreatic ribonuclease family. Homodimer. Interacts with RNH1; inhibiting ANG ribonuclease activity. Interacts with PCNA.

Its subcellular location is the secreted. It is found in the nucleus. The protein resides in the nucleolus. It localises to the cytoplasm. The protein localises to the stress granule. With respect to regulation, has weak tRNA ribonuclease activity by itself due to partial autoinhibition by its C-terminus, which folds into a short alpha-helix that partially occludes the substrate-binding site. In absence of stress, the ribonuclease activity is inhibited by RNH1 in the cytoplasm. In response to stress, dissociates from RNH1 in the cytoplasm and associates with cytoplasmic ribosomes with vacant A-sites: ribosomes directly activate the tRNA ribonuclease activity of ANG by refolding the C-terminal alpha-helix. In response to stress, the angiogenic activity of ANG is inhibited by RNH1 in the nucleus. In terms of biological role, secreted ribonuclease that can either promote or restrict cell proliferation of target cells, depending on the context. Endocytosed in target cells via its receptor PLXNB2 and translocates to the cytoplasm or nucleus. Under stress conditions, localizes to the cytoplasm and promotes the assembly of stress granules (SGs): specifically cleaves a subset of tRNAs within anticodon loops to produce tRNA-derived stress-induced fragments (tiRNAs), resulting in translation repression and inhibition of cell proliferation. tiRNas also prevent formation of apoptosome, thereby promoting cell survival. Preferentially cleaves RNAs between a pyrimidine and an adenosine residue, suggesting that it cleaves the anticodon loop of tRNA(Ala) (32-UUAGCAU-38) after positions 33 and 36. Cleaves a subset of tRNAs, including tRNA(Ala), tRNA(Glu), tRNA(Gly), tRNA(Lys), tRNA(Val), tRNA(His), tRNA(Asp) and tRNA(Sec). Under growth conditions and in differentiated cells, translocates to the nucleus and stimulates ribosomal RNA (rRNA) transcription, including that containing the initiation site sequences of 45S rRNA, thereby promoting cell growth and proliferation. Angiogenin induces vascularization of normal and malignant tissues via its ability to promote rRNA transcription. Involved in hematopoietic stem and progenitor cell (HSPC) growth and survival by promoting rRNA transcription in growth conditions and inhibiting translation in response to stress, respectively. Mediates the crosstalk between myeloid and intestinal epithelial cells to protect the intestinal epithelial barrier integrity: secreted by myeloid cells and promotes intestinal epithelial cells proliferation and survival. Also mediates osteoclast-endothelial cell crosstalk in growing bone: produced by osteoclasts and protects the neighboring vascular cells against senescence by promoting rRNA transcription. The sequence is that of Angiogenin (ANG) from Saimiri sciureus (Common squirrel monkey).